The sequence spans 2789 residues: Testis-expressed protein 15 (2789 aa).

Polar residues predominate over residues histidine 34–lysine 46. Disordered regions lie at residues histidine 34–valine 99, glutamate 169–lysine 191, phenylalanine 1063–proline 1166, lysine 2303–valine 2331, and lysine 2351–lysine 2379. Basic and acidic residues predominate over residues serine 47 to serine 59. Positions aspartate 80 to glutamate 98 are enriched in polar residues. A compositionally biased stretch (basic and acidic residues) spans asparagine 170 to glutamine 179. Basic residues predominate over residues phenylalanine 1063 to alanine 1077. 2 stretches are compositionally biased toward low complexity: residues arginine 1106–serine 1116 and serine 1134–leucine 1160.

It belongs to the TEX15 family. As to quaternary structure, interacts with PIWIL4 and PIWIL2. In terms of tissue distribution, expressed in testis, predominantly in germ cells. Low expression, if any, in ovary. Also expressed in several cancers.

The protein localises to the cytoplasm. It is found in the nucleus. Its function is as follows. Required during spermatogenesis for normal chromosome synapsis and meiotic recombination in germ cells. Necessary for formation of DMC1 and RAD51 foci on meiotic chromosomes, suggesting a specific role in DNA double-stranded break repair. Essential executor of PIWIL4-piRNA pathway directed transposon DNA methylation and silencing in the male embryonic germ cells. PIWIL4-piRNA binds to nascent transposon transcripts and interacts with TEX15, which may in turn recruit the epigenetic silencing machinery to the transposon loci. Not required for piRNA biosynthesis. This chain is Testis-expressed protein 15 (TEX15), found in Homo sapiens (Human).